The primary structure comprises 58 residues: MSNVIVKENESLDSALRRFKRNCAKAGIQQEIRKREHYEKPSVRRKKKSEAARKRKFN.

A compositionally biased stretch (basic and acidic residues) spans 32–42 (IRKREHYEKPS). A disordered region spans residues 32–58 (IRKREHYEKPSVRRKKKSEAARKRKFN). A compositionally biased stretch (basic residues) spans 43–58 (VRRKKKSEAARKRKFN).

Belongs to the bacterial ribosomal protein bS21 family.

The polypeptide is Small ribosomal subunit protein bS21 (Lachnospira eligens (strain ATCC 27750 / DSM 3376 / VPI C15-48 / C15-B4) (Eubacterium eligens)).